A 463-amino-acid polypeptide reads, in one-letter code: Arginine biosynthesis bifunctional protein ArgJ, chloroplastic (463 aa).

Residues Thr207, Lys233, Thr244, Glu331, Asn458, and Thr463 each coordinate substrate. Residue Thr244 is the Nucleophile of the active site.

The protein belongs to the ArgJ family. As to quaternary structure, heterodimer of an alpha and a beta chain.

It localises to the plastid. The protein resides in the chloroplast. The enzyme catalyses N(2)-acetyl-L-ornithine + L-glutamate = N-acetyl-L-glutamate + L-ornithine. It catalyses the reaction L-glutamate + acetyl-CoA = N-acetyl-L-glutamate + CoA + H(+). It functions in the pathway amino-acid biosynthesis; L-arginine biosynthesis; L-ornithine and N-acetyl-L-glutamate from L-glutamate and N(2)-acetyl-L-ornithine (cyclic): step 1/1. Its pathway is amino-acid biosynthesis; L-arginine biosynthesis; N(2)-acetyl-L-ornithine from L-glutamate: step 1/4. Catalyzes two activities which are involved in the cyclic version of arginine biosynthesis: the synthesis of acetylglutamate from glutamate and acetyl-CoA, and of ornithine by transacetylation between acetylornithine and glutamate. The polypeptide is Arginine biosynthesis bifunctional protein ArgJ, chloroplastic (Oryza sativa subsp. japonica (Rice)).